A 707-amino-acid polypeptide reads, in one-letter code: Acyl-CoA ligase 891, peroxisomal (707 aa).

Position 259–270 (259–270 (INYTSGTTGPPK)) interacts with ATP. Positions 525-549 (DGWFRTGDVCTIDEKGRFIIIDRRK) are fatty acid-binding. A Peroxisome targeting signal motif is present at residues 705–707 (AKL).

It belongs to the ATP-dependent AMP-binding enzyme family.

It is found in the peroxisome matrix. The catalysed reaction is (4E,8E)-10-(4-hydroxy-6-methoxy-7-methyl-3-oxo-1,3-dihydro-2-benzofuran-5-yl)-4,8-dimethyldeca-4,8-dienoate + ATP + CoA = (4E,8E)-10-(4-hydroxy-6-methoxy-7-methyl-3-oxo-1,3-dihydro-2-benzofuran-5-yl)-4,8-dimethyldeca-4,8-dienoyl-CoA + AMP + diphosphate. It functions in the pathway secondary metabolite biosynthesis; terpenoid biosynthesis. Its function is as follows. Acyl-CoA ligase involved in the biosynthesis of mycophenolic acid (MPA), the first isolated antibiotic natural product in the world obtained from a culture of Penicillium brevicompactum in 1893. The peroxisomal acyl-CoA ligase 891 converts the intermediate MFDHMP-3C into MFDHMP-3C-CoA which impairs its diffusion from the peroxisome. The first step of the pathway is the synthesis of 5-methylorsellinic acid (5MOA) by the cytosolic polyketide synthase mpaC. 5MOA is then converted to the phthalide compound 5,7-dihydroxy-4,6-dimethylphthalide (DHMP) by the endoplasmic reticulum-bound cytochrome P450 monooxygenase mpaDE. MpaDE first catalyzes hydroxylation of 5-MOA to 4,6-dihydroxy-2-(hydroxymethyl)-3-methylbenzoic acid (DHMB). MpaDE then acts as a lactone synthase that catalyzes the ring closure to convert DHMB into DHMP. The next step is the prenylation of DHMP by the Golgi apparatus-associated prenyltransferase mpaA to yield farnesyl-DHMP (FDHMP). The ER-bound oxygenase mpaB then mediates the oxidative cleavage the C19-C20 double bond in FDHMP to yield FDHMP-3C via a mycophenolic aldehyde intermediate. The O-methyltransferase mpaG catalyzes the methylation of FDHMP-3C to yield MFDHMP-3C. After the cytosolic methylation of FDHMP-3C, MFDHMP-3C enters into peroxisomes probably via free diffusion due to its low molecular weight. Upon a peroxisomal CoA ligation reaction, catalyzed by a beta-oxidation component enzyme acyl-CoA ligase ACL891, MFDHMP-3C-CoA would then be restricted to peroxisomes for the following beta-oxidation pathway steps. The peroxisomal beta-oxidation machinery than converts MFDHMP-3C-CoA into MPA_CoA, via a beta-oxidation chain-shortening process. Finally mpaH acts as a peroxisomal acyl-CoA hydrolase with high substrate specificity toward MPA-CoA to release the final product MPA. This chain is Acyl-CoA ligase 891, peroxisomal, found in Penicillium roqueforti (strain FM164).